An 871-amino-acid chain; its full sequence is Protein arg-6, mitochondrial (871 aa).

A mitochondrion-targeting transit peptide spans 1–44 (MYSACAVALRAGARRVVRRVPKSARALPRAAAARRQISTTAARS). An N-acetyltransferase domain is found at 336–488 (QASTSLSEFK…DFTENGRAML (153 aa)). Cys-689 is a catalytic residue.

In the N-terminal section; belongs to the acetylglutamate kinase family. It in the C-terminal section; belongs to the NAGSA dehydrogenase family. The protein precursor is cleaved into the two biologically active enzymes, the kinase and the reductase.

It is found in the mitochondrion. The catalysed reaction is N-acetyl-L-glutamate 5-semialdehyde + phosphate + NADP(+) = N-acetyl-L-glutamyl 5-phosphate + NADPH + H(+). It carries out the reaction N-acetyl-L-glutamate + ATP = N-acetyl-L-glutamyl 5-phosphate + ADP. It functions in the pathway amino-acid biosynthesis; L-arginine biosynthesis; N(2)-acetyl-L-ornithine from L-glutamate: step 2/4. It participates in amino-acid biosynthesis; L-arginine biosynthesis; N(2)-acetyl-L-ornithine from L-glutamate: step 3/4. This chain is Protein arg-6, mitochondrial (arg-6), found in Neurospora crassa (strain ATCC 24698 / 74-OR23-1A / CBS 708.71 / DSM 1257 / FGSC 987).